A 639-amino-acid polypeptide reads, in one-letter code: Chaperone protein DnaK (639 aa).

T197 bears the Phosphothreonine; by autocatalysis mark. The segment at 600–639 is disordered; it reads SGAQGGAQAGPDMNAGQSNAGQNNGKQDDNVQDADFEEVK. A compositionally biased stretch (low complexity) spans 613–624; the sequence is NAGQSNAGQNNG. Residues 629–639 show a composition bias toward acidic residues; it reads NVQDADFEEVK.

Belongs to the heat shock protein 70 family.

In terms of biological role, acts as a chaperone. This Bacteroides fragilis (strain ATCC 25285 / DSM 2151 / CCUG 4856 / JCM 11019 / LMG 10263 / NCTC 9343 / Onslow / VPI 2553 / EN-2) protein is Chaperone protein DnaK.